A 720-amino-acid polypeptide reads, in one-letter code: WSC domain-containing protein ARB_07870 (720 aa).

Positions 1–24 are cleaved as a signal peptide; sequence MLINLSAVWAAFALSGVLAPPTWP. N-linked (GlcNAc...) asparagine glycans are attached at residues asparagine 4, asparagine 108, asparagine 181, asparagine 264, asparagine 296, asparagine 318, asparagine 474, asparagine 549, asparagine 581, asparagine 629, asparagine 640, asparagine 663, and asparagine 701. WSC domains are found at residues 524 to 615 and 627 to 718; these read DYTF…YKDD and GYNY…YTKL.

It belongs to the WSCD family.

The protein resides in the secreted. The chain is WSC domain-containing protein ARB_07870 from Arthroderma benhamiae (strain ATCC MYA-4681 / CBS 112371) (Trichophyton mentagrophytes).